A 217-amino-acid polypeptide reads, in one-letter code: ITG-like peptide (217 aa).

Residues 1 to 21 form the signal peptide; that stretch reads MHRTMAVTAVLVLSAAGAAHA. The propeptide occupies 22-208; that stretch reads WGGLFNRFSS…REFVQHTAGE (187 aa).

In terms of tissue distribution, ITG-like peptide: Expressed in corpora cardiaca (CC), corpora allata (CA), antennal lobe (AL) and gnathal ganglion (GNG) (at protein level). Expression in AL detected in all animals, expression in GNG detected in most animals and in CA and CC detected in few animals (at protein level).

The protein localises to the secreted. This Agrotis ipsilon (Black cutworm moth) protein is ITG-like peptide.